The following is a 487-amino-acid chain: UDP-glucosyl transferase 73CC6 (487 aa).

H17 acts as the Proton acceptor in catalysis. D114 serves as the catalytic Charge relay. Positions 282, 346, 347, 364, 368, 369, 372, and 386 each coordinate UDP.

This sequence belongs to the UDP-glycosyltransferase family. As to expression, mainly expressed in flowers and flower buds and, to a lesser extent, in leaves, stems and roots.

The protein operates within secondary metabolite biosynthesis; terpenoid biosynthesis. Component of the oleanane-type triterpene saponins (e.g. saponarioside A and saponarioside B) biosynthetic pathway, leading to the production of natural products with detergent properties used as traditional sources of soap. A glycosyltransferase that mediates the conversion of QA-di to QA-tri via the elongation of the C-3 sugar chain with a D-xylose. The chain is UDP-glucosyl transferase 73CC6 from Saponaria officinalis (Common soapwort).